The following is a 690-amino-acid chain: MPYLHRSLRPQPQPVPRDARTVHSSGHSFEQLRQSCLQSGTLFEDADFPASNSSLFYSERPQVPFVWKRPGEIVENPEFILGGATRTDICQGELGDCWLLAAIASLTLNQKALARVVPQDQGFGSGYAGIFHFQFWQHSEWLDVVIDDRLPTFRDRLVFLHSADHNEFWSALLEKAYAKLNGSYEALKGGSAIEAMEDFTGGVAENFQIREAPEDFYEILEKALRRGSLLGCSIDTLNASESEARTPLGLIKGHAYTVTGLDQVNFHGQRIKLIRVRNPWGQVEWNGPWSDSSPEWRSMSLEEQKRLGHTALDDGEFWMAFEDFKTHFDKVEICNLTPDALEDNTLHKWEVTIHQGSWVRGSTAGGCRNFLDTFWTNPQIKLSLTERDEGQEGCTFLAALMQKDRRRLKRFGANMLTIGYAIYQCPDKDGHLNRDFFRYHASLARSKTFINLREVSGRFQLPPGDYILIPSTFEPHQEADFCLRIFSEKKAVTQDLDENIDIDLPELPKPTPQEEETEEERQFRALFRRIAGEDMEVSAEELEYVLNAVLQKKTALKFKRLSLLSCRNIISLMDTSGNGKMEFEEFRVFWDKLRYWMDLFLQFDVDKSGTMSSYELRTALKAAGFQLGSHLLQLIVLRYADENLQLDFDDYLNCLVRLENASRVFQCLSVKNKDFIHLNINEFINLTMNI.

Residues 1-24 (MPYLHRSLRPQPQPVPRDARTVHS) are disordered. One can recognise a Calpain catalytic domain in the interval 42-337 (LFEDADFPAS…FDKVEICNLT (296 aa)). Ca(2+) contacts are provided by leucine 81, glycine 83, and aspartate 88. Cysteine 97 is an active-site residue. Glutamate 167 serves as a coordination point for Ca(2+). Residues histidine 254 and asparagine 278 contribute to the active site. Positions 284, 291, 312, 314, and 316 each coordinate Ca(2+). Residues 338–521 (PDALEDNTLH…PQEEETEEER (184 aa)) are domain III. Residues 522-690 (QFRALFRRIA…NEFINLTMNI (169 aa)) are domain IV. 3 consecutive EF-hand domains span residues 534-552 (DMEVSAEELEYVLNAVLQK), 561-589 (LSLLSCRNIISLMDTSGNGKMEFEEFRVF), and 591-626 (DKLRYWMDLFLQFDVDKSGTMSSYELRTALKAAGFQ). Positions 574, 576, 578, 580, 585, 604, 606, 608, 610, and 615 each coordinate Ca(2+).

The protein belongs to the peptidase C2 family. In terms of tissue distribution, predominantly expressed in stomach and small intestine, although low levels of expression in other organs.

Its function is as follows. Calcium-regulated non-lysosomal thiol-protease. This chain is Calpain-9 (Capn9), found in Rattus norvegicus (Rat).